Here is a 72-residue protein sequence, read N- to C-terminus: Translational regulator CsrA (72 aa).

This sequence belongs to the CsrA/RsmA family. As to quaternary structure, homodimer; the beta-strands of each monomer intercalate to form a hydrophobic core, while the alpha-helices form wings that extend away from the core.

The protein localises to the cytoplasm. Its function is as follows. A translational regulator that binds mRNA to regulate translation initiation and/or mRNA stability. Usually binds in the 5'-UTR at or near the Shine-Dalgarno sequence preventing ribosome-binding, thus repressing translation. Its main target seems to be the major flagellin gene, while its function is anatagonized by FliW. The protein is Translational regulator CsrA of Lachnoclostridium phytofermentans (strain ATCC 700394 / DSM 18823 / ISDg) (Clostridium phytofermentans).